The primary structure comprises 805 residues: Sucrose synthase (805 aa).

The interval 275 to 752 is GT-B glycosyltransferase; it reads MVFNVVILSP…GLQRIEEKYT (478 aa).

This sequence belongs to the glycosyltransferase 1 family. Plant sucrose synthase subfamily.

It catalyses the reaction an NDP-alpha-D-glucose + D-fructose = a ribonucleoside 5'-diphosphate + sucrose + H(+). Sucrose-cleaving enzyme that provides UDP-glucose and fructose for various metabolic pathways. The sequence is that of Sucrose synthase from Medicago sativa (Alfalfa).